Consider the following 1412-residue polypeptide: DNA-directed RNA polymerase subunit beta (1412 aa).

Belongs to the RNA polymerase beta chain family. The RNAP catalytic core consists of 2 alpha, 1 beta, 1 beta' and 1 omega subunit. When a sigma factor is associated with the core the holoenzyme is formed, which can initiate transcription.

It carries out the reaction RNA(n) + a ribonucleoside 5'-triphosphate = RNA(n+1) + diphosphate. In terms of biological role, DNA-dependent RNA polymerase catalyzes the transcription of DNA into RNA using the four ribonucleoside triphosphates as substrates. This Bdellovibrio bacteriovorus (strain ATCC 15356 / DSM 50701 / NCIMB 9529 / HD100) protein is DNA-directed RNA polymerase subunit beta.